The primary structure comprises 366 residues: Mitochondrial carrier protein MTM1 (366 aa).

Solcar repeat units follow at residues 14-149, 156-250, and 266-359; these read ERML…IRDV, YPTL…CKER, and VHFI…SKKV. Helical transmembrane passes span 17–36, 126–146, 162–182, 229–249, 268–286, and 331–352; these read LSAG…MDVV, SLTL…YEYI, LFCG…LELV, TLWR…LCKE, FINS…AICT, and LYTG…MISS.

This sequence belongs to the mitochondrial carrier (TC 2.A.29) family.

Its subcellular location is the mitochondrion inner membrane. Functionally, involved in the mitochondrial activation of SOD2 by specifically facilitating insertion of the essential manganese cofactor. Has the ability to activate iron regulon in an iron-dependent manner. Responds to calorie restriction (CR) strength. The protein is Mitochondrial carrier protein MTM1 (MTM1) of Saccharomyces cerevisiae (strain ATCC 204508 / S288c) (Baker's yeast).